The primary structure comprises 398 residues: UDP-D-apiose/UDP-D-xylose synthase (398 aa).

57-88 (DVYCDKIRHLVDPAPPHLHGRISFHRLNIKND) contributes to the NAD(+) binding site. R190 lines the substrate pocket. The active-site Proton acceptor is Y193. 193–197 (YACAK) contacts NAD(+). Position 222 (N222) interacts with substrate. R243 provides a ligand contact to NAD(+). Substrate-binding positions include 244–248 (VLACF), 261–268 (VDGGQSQR), and 345–349 (DSDKR).

The protein belongs to the NAD(P)-dependent epimerase/dehydratase family. In terms of assembly, homodimer. Requires NAD(+) as cofactor.

The protein resides in the cytoplasm. In terms of biological role, catalyzes the conversion of UDP-D-glucuronate to a mixture of UDP-D-apiose and UDP-D-xylose. D-Apiose (3-C-hydroxymethyl-d-erythrose) is the only plant cell wall monosaccharide with a branched carbon skeleton and found in rhamnogalacturonan II (RG-II), apiogalacturonan, and several apioglycosides. This chain is UDP-D-apiose/UDP-D-xylose synthase, found in Oryza sativa subsp. japonica (Rice).